Here is a 138-residue protein sequence, read N- to C-terminus: ATP synthase epsilon chain (138 aa).

It belongs to the ATPase epsilon chain family. As to quaternary structure, F-type ATPases have 2 components, CF(1) - the catalytic core - and CF(0) - the membrane proton channel. CF(1) has five subunits: alpha(3), beta(3), gamma(1), delta(1), epsilon(1). CF(0) has three main subunits: a, b and c.

It is found in the cell membrane. In terms of biological role, produces ATP from ADP in the presence of a proton gradient across the membrane. The sequence is that of ATP synthase epsilon chain (atpC) from Buchnera aphidicola subsp. Schizaphis graminum (strain Sg).